The primary structure comprises 56 residues: Endoregulin (56 aa).

Residues 25–45 (LTVIGLFTSTFLLFVLFAVVF) form a helical membrane-spanning segment.

As to quaternary structure, homooligomer. Can also form heterooligomers with other sarcoplasmic/endoplasmic reticulum calcium ATPase (SERCA) regulators ARLN, PLN, SLN and STRIT1/DWORF. Monomer. Interacts as a monomer with ATP2A2/SERCA2; the interaction results in inhibition of ATP2A2 Ca(2+) affinity. In terms of tissue distribution, largely expressed in non-muscle tissues with the exception of weak expression in body wall muscles at 14.5 dpc. Expressed in epithelial cells of the trachea, bronchus, lung, intestine, pancreas, and liver.

Its subcellular location is the endoplasmic reticulum membrane. Functionally, inhibits the activity of the calcium ATPases ATP2A2/SERCA2 and ATP2A3/SERCA3 by decreasing their apparent affinity for Ca(2+). This Mus musculus (Mouse) protein is Endoregulin (Erln).